Here is a 270-residue protein sequence, read N- to C-terminus: Pre-mRNA-splicing factor CWC23 (270 aa).

A J domain is found at 12–84; sequence DLYRILHIHV…EHKKEYDIWY (73 aa).

This sequence belongs to the DnaJ family. In terms of assembly, associated with the spliceosome.

It localises to the cytoplasm. Its subcellular location is the nucleus. Its function is as follows. Involved in pre-mRNA splicing. May be involved in endoplasmic reticulum-associated protein degradation (ERAD) and required for growth at low and high temperatures. The chain is Pre-mRNA-splicing factor CWC23 (CWC23) from Kluyveromyces lactis (strain ATCC 8585 / CBS 2359 / DSM 70799 / NBRC 1267 / NRRL Y-1140 / WM37) (Yeast).